We begin with the raw amino-acid sequence, 48 residues long: Protein TUNAR (48 aa).

The segment at 1–20 is disordered; the sequence is MVITSENDEDRGGQEKESKE. Over residues 10–20 the composition is skewed to basic and acidic residues; that stretch reads DRGGQEKESKE. The chain crosses the membrane as a helical span at residues 24–44; sequence LAMLGIIGTILNLIVIIFVYI.

As to quaternary structure, interacts with ATPase ATP2A2/SERCA2. Interacts with ATPase ATP2A3/SERCA3; the interaction occurs at low levels in low glucose conditions and is increased by high glucose levels. In terms of tissue distribution, highly expressed in pancreatic islets where it is enriched in the insulin-producing beta cells.

The protein localises to the endoplasmic reticulum membrane. The protein resides in the extracellular vesicle membrane. In neurons, plays a role in the regulation of intracellular Ca(2+), possibly by acting as an activator of ATP2A2/SERCA2, thus increasing the efficiency with which Ca(2+) is removed from the cytoplasm. Inhibits differentiation of embryonic stem cells into neurons and inhibits neurite outgrowth, likely as a result of its role in intracellular Ca(2+) regulation. In pancreatic beta cells, lowers Ca(2+) levels in the endoplasmic reticulum and enhances glucose-stimulated insulin secretion. The protein is Protein TUNAR of Homo sapiens (Human).